A 289-amino-acid polypeptide reads, in one-letter code: Protoheme IX farnesyltransferase (289 aa).

The next 9 membrane-spanning stretches (helical) occupy residues 13-33 (LIKPRVTSLVLATIIPGLYLA), 40-60 (VFLITVTLFGTFLMSSASFIF), 85-105 (ISIPQATLVGISMMGLSFYML), 111-131 (LLTALCALTALISYVFLYTIF), 139-159 (NIVIGGVAGCVGPLIGYAAIG), 168-188 (ILFTMIFLWTPAHFWALAIFL), 212-232 (SIFFYTILYSLSCVSFYFLEP), 234-254 (MGLLYLVIVLLVCIWMGILSY), and 269-289 (FLFSIFHLFLINITIVVDHMI).

The protein belongs to the UbiA prenyltransferase family. Protoheme IX farnesyltransferase subfamily.

It localises to the cell inner membrane. It catalyses the reaction heme b + (2E,6E)-farnesyl diphosphate + H2O = Fe(II)-heme o + diphosphate. Its pathway is porphyrin-containing compound metabolism; heme O biosynthesis; heme O from protoheme: step 1/1. Functionally, converts heme B (protoheme IX) to heme O by substitution of the vinyl group on carbon 2 of heme B porphyrin ring with a hydroxyethyl farnesyl side group. This chain is Protoheme IX farnesyltransferase, found in Leptospira borgpetersenii serovar Hardjo-bovis (strain JB197).